A 287-amino-acid polypeptide reads, in one-letter code: GPN-loop GTPase 3 (287 aa).

Residue 12 to 17 (GAGKST) coordinates GTP. The short motif at 69 to 71 (GPN) is the Gly-Pro-Asn (GPN)-loop; involved in dimer interface element. 172 to 175 (SKMD) is a binding site for GTP.

It belongs to the GPN-loop GTPase family. In terms of assembly, heterodimers with GPN1 or GPN2. Binds to RNA polymerase II (RNAPII).

Functionally, small GTPase required for proper nuclear import of RNA polymerase II and III (RNAPII and RNAPIII). May act at an RNAP assembly step prior to nuclear import. This Cryptococcus neoformans var. neoformans serotype D (strain B-3501A) (Filobasidiella neoformans) protein is GPN-loop GTPase 3.